The following is a 677-amino-acid chain: UPF0313 protein RPA0679 (677 aa).

The Radical SAM core domain maps to Ala-335–Arg-601. [4Fe-4S] cluster contacts are provided by Cys-349, Cys-353, and Cys-356. The segment at Arg-635–Lys-677 is disordered.

The protein belongs to the UPF0313 family. [4Fe-4S] cluster is required as a cofactor.

This Rhodopseudomonas palustris (strain ATCC BAA-98 / CGA009) protein is UPF0313 protein RPA0679.